The following is a 270-amino-acid chain: MENIGRQRPIGVFDSGIGGLTNVRALMERLPMENIIYFGDTARVPYGTKSKATIENFSMQIVDFLLEHDVKAMVIACNTIAAVAGQKIRQKTGNMPVLDVISAGAKAALATTRNNKIGIIATNTTVNSNAYARAIHRNNPDTLVRTQAAPLLVPLVEEGWLEHEVTRLTVCEYLKPLLADGIDTLVLGCTHFPLLKPLIGREAGNVALVDSAITTAEETARVLAQEGLLNTDNNNPDYRFYVSDIPLKFRTIGERFLGRTMEQIEMVSLG.

Substrate contacts are provided by residues 14–15 (DS) and 46–47 (YG). Residue cysteine 77 is the Proton donor/acceptor of the active site. A substrate-binding site is contributed by 78-79 (NT). Cysteine 189 (proton donor/acceptor) is an active-site residue. 190–191 (TH) serves as a coordination point for substrate.

The protein belongs to the aspartate/glutamate racemases family.

It catalyses the reaction L-glutamate = D-glutamate. The protein operates within cell wall biogenesis; peptidoglycan biosynthesis. Its function is as follows. Provides the (R)-glutamate required for cell wall biosynthesis. The chain is Glutamate racemase from Neisseria meningitidis serogroup A / serotype 4A (strain DSM 15465 / Z2491).